Consider the following 908-residue polypeptide: Translation initiation factor IF-2 (908 aa).

2 disordered regions span residues 122–180 (PVVE…VDDA) and 203–267 (EKAR…AVKK). The span at 132–143 (VAAEPEVVEAPE) shows a compositional bias: acidic residues. A compositionally biased stretch (low complexity) spans 157–166 (EEPAAPAAPV). Basic and acidic residues predominate over residues 223–248 (AKEDARPTKHVEDLAKLKKPHDKKDE). Over residues 256-267 (KHNKKAGKAVKK) the composition is skewed to basic residues. One can recognise a tr-type G domain in the interval 409–578 (PRAPIVTVMG…ALQAELLELS (170 aa)). Positions 418–425 (GHVDHGKT) are G1. 418-425 (GHVDHGKT) lines the GTP pocket. Positions 443–447 (GITQH) are G2. Positions 464-467 (DTPG) are G3. Residues 464–468 (DTPGH) and 518–521 (NKMD) contribute to the GTP site. Positions 518–521 (NKMD) are G4. The interval 554–556 (SAH) is G5.

The protein belongs to the TRAFAC class translation factor GTPase superfamily. Classic translation factor GTPase family. IF-2 subfamily.

Its subcellular location is the cytoplasm. Its function is as follows. One of the essential components for the initiation of protein synthesis. Protects formylmethionyl-tRNA from spontaneous hydrolysis and promotes its binding to the 30S ribosomal subunits. Also involved in the hydrolysis of GTP during the formation of the 70S ribosomal complex. The chain is Translation initiation factor IF-2 from Saccharophagus degradans (strain 2-40 / ATCC 43961 / DSM 17024).